An 850-amino-acid chain; its full sequence is Protein argonaute 8 (850 aa).

A disordered region spans residues 1 to 30; the sequence is MDTTLPPPQHMEREPLKSKSSLLPMTRRGN. Positions 247–361 constitute a PAZ domain; it reads PVVDFLIANQ…FPIELCELVS (115 aa). Positions 518–811 constitute a Piwi domain; the sequence is QSILGEVPPK…AAAQMATAMK (294 aa).

Belongs to the argonaute family. Ago subfamily.

Involved in RNA-mediated post-transcriptional gene silencing (PTGS). Main component of the RNA-induced silencing complex (RISC) that binds to a short guide RNA such as a microRNA (miRNA) or small interfering RNA (siRNA). RISC uses the mature miRNA or siRNA as a guide for slicer-directed cleavage of homologous mRNAs to repress gene expression. In Arabidopsis thaliana (Mouse-ear cress), this protein is Protein argonaute 8 (AGO8).